The primary structure comprises 141 residues: Large ribosomal subunit protein uL16 (141 aa).

The interval 1-23 is disordered; the sequence is MLMPKRTKYRKQMKGRNRGKAHR.

The protein belongs to the universal ribosomal protein uL16 family. As to quaternary structure, part of the 50S ribosomal subunit.

Binds 23S rRNA and is also seen to make contacts with the A and possibly P site tRNAs. The protein is Large ribosomal subunit protein uL16 of Helicobacter acinonychis (strain Sheeba).